Here is a 306-residue protein sequence, read N- to C-terminus: Tyrosine--tRNA ligase (306 aa).

The L-tyrosine site is built by Y32 and E36. A 'HIGH' region motif is present at residues 37–45 (PSGKIHLGH). The interval 151–158 (YPIMQVND) is tyrosine. Q173 lines the L-tyrosine pocket. Positions 204–208 (KMSSS) match the 'KMSKS' region motif. ATP is bound at residue S207. Interaction with t-RNA stretches follow at residues 228-231 (KAYC) and 283-288 (HPMDLK).

The protein belongs to the class-I aminoacyl-tRNA synthetase family. TyrS type 3 subfamily. In terms of assembly, homodimer.

It is found in the cytoplasm. It carries out the reaction tRNA(Tyr) + L-tyrosine + ATP = L-tyrosyl-tRNA(Tyr) + AMP + diphosphate + H(+). Functionally, catalyzes the attachment of tyrosine to tRNA(Tyr) in a two-step reaction: tyrosine is first activated by ATP to form Tyr-AMP and then transferred to the acceptor end of tRNA(Tyr). The protein is Tyrosine--tRNA ligase (tyrS) of Methanocaldococcus jannaschii (strain ATCC 43067 / DSM 2661 / JAL-1 / JCM 10045 / NBRC 100440) (Methanococcus jannaschii).